We begin with the raw amino-acid sequence, 424 residues long: Histidine--tRNA ligase (424 aa).

This sequence belongs to the class-II aminoacyl-tRNA synthetase family. As to quaternary structure, homodimer.

Its subcellular location is the cytoplasm. The enzyme catalyses tRNA(His) + L-histidine + ATP = L-histidyl-tRNA(His) + AMP + diphosphate + H(+). In Shigella dysenteriae serotype 1 (strain Sd197), this protein is Histidine--tRNA ligase.